The primary structure comprises 341 residues: CRISPR-associated endonuclease Cas1 (341 aa).

Residues E173, H242, and E257 each coordinate Mn(2+).

It belongs to the CRISPR-associated endonuclease Cas1 family. Homodimer, forms a heterotetramer with a Cas2 homodimer. Mg(2+) serves as cofactor. It depends on Mn(2+) as a cofactor.

Its function is as follows. CRISPR (clustered regularly interspaced short palindromic repeat), is an adaptive immune system that provides protection against mobile genetic elements (viruses, transposable elements and conjugative plasmids). CRISPR clusters contain spacers, sequences complementary to antecedent mobile elements, and target invading nucleic acids. CRISPR clusters are transcribed and processed into CRISPR RNA (crRNA). Acts as a dsDNA endonuclease. Involved in the integration of spacer DNA into the CRISPR cassette. The sequence is that of CRISPR-associated endonuclease Cas1 from Korarchaeum cryptofilum (strain OPF8).